We begin with the raw amino-acid sequence, 149 residues long: Arginine repressor (149 aa).

It belongs to the ArgR family.

Its subcellular location is the cytoplasm. The protein operates within amino-acid biosynthesis; L-arginine biosynthesis [regulation]. Its function is as follows. Regulates arginine biosynthesis genes. The polypeptide is Arginine repressor (Exiguobacterium sibiricum (strain DSM 17290 / CCUG 55495 / CIP 109462 / JCM 13490 / 255-15)).